Here is a 79-residue protein sequence, read N- to C-terminus: Small ribosomal subunit protein eS17 (79 aa).

It belongs to the eukaryotic ribosomal protein eS17 family.

The sequence is that of Small ribosomal subunit protein eS17 from Saccharolobus islandicus (strain Y.N.15.51 / Yellowstone #2) (Sulfolobus islandicus).